Here is a 534-residue protein sequence, read N- to C-terminus: Tyrosine-protein kinase Fyn (534 aa).

The N-myristoyl glycine moiety is linked to residue Gly2. 2 S-palmitoyl cysteine lipidation sites follow: Cys3 and Cys6. At Thr12 the chain carries Phosphothreonine; by PKC. Positions 15 to 39 are disordered; that stretch reads TDERDGSLTQSSGYRYGTDPTPQHY. The region spanning 82–143 is the SH3 domain; the sequence is TGVTLFEALY…PSNYVAPVDS (62 aa). Residues 149 to 246 enclose the SH2 domain; that stretch reads WYFGKLGRKD…GLCFNLTVIA (98 aa). The 254-residue stretch at 268 to 521 folds into the Protein kinase domain; that stretch reads LFLEQKLGQG…YLQGFLEDYF (254 aa). Residues 274–282 and Lys296 each bind ATP; that span reads LGQGCFAEV. Asp387 acts as the Proton acceptor in catalysis. Phosphotyrosine; by autocatalysis is present on Tyr417. Tyr528 is modified (phosphotyrosine).

The protein belongs to the protein kinase superfamily. Tyr protein kinase family. SRC subfamily. As to quaternary structure, associates through its SH3 domain, to the p85 subunit of phosphatidylinositol 3-kinase. It depends on Mn(2+) as a cofactor. In terms of tissue distribution, thymus and spleen.

It localises to the cytoplasm. The protein resides in the nucleus. The protein localises to the cell membrane. It is found in the perikaryon. The catalysed reaction is L-tyrosyl-[protein] + ATP = O-phospho-L-tyrosyl-[protein] + ADP + H(+). Inhibited by phosphorylation of Tyr-528 by leukocyte common antigen and activated by dephosphorylation of this site. Its function is as follows. Tyrosine-protein kinase implicated in the control of cell growth. Plays a role in the regulation of intracellular calcium levels. Required in brain development and mature brain function with important roles in the regulation of axon growth, axon guidance, and neurite extension. Role in CNTN1-mediated signaling. The polypeptide is Tyrosine-protein kinase Fyn (FYN) (Gallus gallus (Chicken)).